The sequence spans 268 residues: Purine nucleoside phosphorylase (268 aa).

Phosphate is bound by residues Ser-36, His-68, 88-90 (RIH), and Ala-120. An a purine D-ribonucleoside-binding site is contributed by Glu-189. Ser-208 serves as a coordination point for phosphate. Asn-231 is an a purine D-ribonucleoside binding site.

This sequence belongs to the PNP/MTAP phosphorylase family. As to quaternary structure, homotrimer.

It catalyses the reaction a purine 2'-deoxy-D-ribonucleoside + phosphate = a purine nucleobase + 2-deoxy-alpha-D-ribose 1-phosphate. It functions in the pathway purine metabolism; purine nucleoside salvage. Functionally, the purine nucleoside phosphorylases catalyze the phosphorolytic breakdown of the N-glycosidic bond in the beta-(deoxy)ribonucleoside molecules, with the formation of the corresponding free purine bases and pentose-1-phosphate. Cleaves guanosine, inosine, 2'-deoxyguanosine and 2'-deoxyinosine. The sequence is that of Purine nucleoside phosphorylase (punA) from Mycobacterium bovis (strain ATCC BAA-935 / AF2122/97).